A 201-amino-acid chain; its full sequence is Cytochrome c oxidase assembly protein CtaG (201 aa).

The Cytoplasmic portion of the chain corresponds to 1–13 (MTDQGENEKKQRR). The helical; Signal-anchor for type II membrane protein transmembrane segment at 14-36 (SNATIAVACLSFFVCMIGAAYAS) threads the bilayer. The Periplasmic portion of the chain corresponds to 37–201 (VPLYRIFCQV…KAVGSTRNGG (165 aa)).

Belongs to the COX11/CtaG family.

The protein resides in the cell inner membrane. Its function is as follows. Exerts its effect at some terminal stage of cytochrome c oxidase synthesis, probably by being involved in the insertion of the copper B into subunit I. The sequence is that of Cytochrome c oxidase assembly protein CtaG from Brucella suis (strain ATCC 23445 / NCTC 10510).